A 309-amino-acid chain; its full sequence is Taste receptor type 2 member 46 (309 aa).

Methionine 1 is a topological domain (extracellular). Residues 2 to 22 (ITFLPIIFSILIVVTFVIGNF) form a helical membrane-spanning segment. The Cytoplasmic portion of the chain corresponds to 23-46 (ANGFIALANSIEWFKRQKISFADQ). A helical membrane pass occupies residues 47 to 67 (ILTALAVSRVGLLWVLLLNWY). Residues 68–86 (ATELNPAFYSIEVRITAYN) lie on the Extracellular side of the membrane. A helical membrane pass occupies residues 87-107 (LWAVINHFSNWLATSLSIFYL). Over 108–126 (LKIANFSNLIFLRLKRRVK) the chain is Cytoplasmic. The helical transmembrane segment at 127–147 (SVVLVILLGPLLFLVCHLFVI) threads the bilayer. Residues 148-178 (NMNQIIWTKEYEGNMTWKIKLRSAMYLSNIT) lie on the Extracellular side of the membrane. Residues asparagine 161 and asparagine 176 are each glycosylated (N-linked (GlcNAc...) asparagine). The helical transmembrane segment at 179–199 (VTILANLVPFTLTLISFLLLI) threads the bilayer. The Cytoplasmic portion of the chain corresponds to 200-229 (CSLCKHLKKMQLHGKGSQDPSMKVHIKALQ). Residues 230–250 (TVTSFLLLCAIYFLSIIMSVW) form a helical membrane-spanning segment. The Extracellular segment spans residues 251 to 259 (SFESLENKP). The helical transmembrane segment at 260-280 (VFMFCEAITFSYPSTHPFILI) threads the bilayer. Residues 281 to 309 (WGNKKLKQTFLSVLWHVRYWVKGEEPSSP) lie on the Cytoplasmic side of the membrane.

Belongs to the G-protein coupled receptor T2R family.

It is found in the membrane. The protein localises to the cell projection. The protein resides in the cilium membrane. Its function is as follows. Receptor that may play a role in the perception of bitterness and is gustducin-linked. May play a role in sensing the chemical composition of the gastrointestinal content. The activity of this receptor may stimulate alpha gustducin, mediate PLC-beta-2 activation and lead to the gating of TRPM5. In airway epithelial cells, binding of bitter compounds increases the intracellular calcium ion concentration and stimulates ciliary beat frequency. In Pan paniscus (Pygmy chimpanzee), this protein is Taste receptor type 2 member 46 (TAS2R46).